We begin with the raw amino-acid sequence, 652 residues long: Sodium-dependent phosphate transporter 2 (652 aa).

Topologically, residues 1–5 are extracellular; sequence MAMDE. Residues 6-26 form a helical membrane-spanning segment; it reads YLWMVILGFIIAFILAFSVGA. Over 27-46 the chain is Cytoplasmic; the sequence is NDVANSFGTAVGSGVVTLRQ. Residues 47 to 67 form a helical membrane-spanning segment; that stretch reads ACILASIFETTGSVLLGAKVG. At 68–86 the chain is on the extracellular side; sequence ETIRKGIIDVNLYNETVET. N-linked (GlcNAc...) asparagine glycosylation is present at Asn81. A helical transmembrane segment spans residues 87 to 107; that stretch reads LMAGEVSAMVGSAVWQLIASF. The Cytoplasmic portion of the chain corresponds to 108-109; it reads LR. Residues 110-130 traverse the membrane as a helical segment; it reads LPISGTHCIVGSTIGFSLVAI. Residues 131 to 142 are Extracellular-facing; sequence GTKGVQWMELVK. Residues 143–163 traverse the membrane as a helical segment; it reads IVASWFISPLLSGFMSGLLFV. Topologically, residues 164–190 are cytoplasmic; it reads LIRIFILKKEDPVPNGLRALPVFYAAT. A helical transmembrane segment spans residues 191–211; the sequence is IAINVFSIMYTGAPVLGLVLP. Over 212 to 213 the chain is Extracellular; the sequence is MW. A helical transmembrane segment spans residues 214–234; sequence AIALISFGVALLFAFFVWLFV. Residues 235 to 482 are Cytoplasmic-facing; that stretch reads CPWMRRKITG…EEKEEKDAPE (248 aa). Residues Ser253, Ser256, Ser259, and Ser268 each carry the phosphoserine modification. The disordered stretch occupies residues 273 to 307; it reads ELPGAKANDDSTIPLTGAAGETLGTSEGTSAGSHP. Residues 295 to 304 are compositionally biased toward polar residues; it reads LGTSEGTSAG. Residues Ser316 and Ser385 each carry the phosphoserine modification. The tract at residues 458–477 is disordered; it reads SELADPDQPREDPAEEEKEE. Residues 483–503 traverse the membrane as a helical segment; it reads VHLLFHFLQVLTACFGSFAHG. Topologically, residues 504-530 are extracellular; the sequence is GNDVSNAIGPLVALWLIYKQGGVTQEA. A helical membrane pass occupies residues 531 to 551; the sequence is ATPVWLLFYGGVGICTGLWVW. The Cytoplasmic portion of the chain corresponds to 552 to 571; that stretch reads GRRVIQTMGKDLTPITPSSG. Residues 572-586 traverse the membrane as a helical segment; the sequence is FTIELASAFTVVIAS. At 587-593 the chain is on the extracellular side; it reads NIGLPVS. Residues 594–609 traverse the membrane as a helical segment; it reads TTHCKVGSVVAVGWIR. Over 610-621 the chain is Cytoplasmic; the sequence is SRKAVDWRLFRN. A helical transmembrane segment spans residues 622 to 642; the sequence is IFVAWFVTVPVAGLFSAAVMA. The Extracellular portion of the chain corresponds to 643 to 652; the sequence is LLMYGILPYV.

It belongs to the inorganic phosphate transporter (PiT) (TC 2.A.20) family. In terms of assembly, homodimer. As to expression, ubiquitously expressed.

The protein resides in the cell membrane. It localises to the apical cell membrane. The enzyme catalyses 2 Na(+)(out) + phosphate(out) = 2 Na(+)(in) + phosphate(in). Functionally, sodium-phosphate symporter which preferentially transports the monovalent form of phosphate with a stoichiometry of two sodium ions per phosphate ion. Plays a critical role in the determination of bone quality and strength by providing phosphate for bone mineralization. Required to maintain normal cerebrospinal fluid phosphate levels. Mediates phosphate-induced calcification of vascular smooth muscle cells (VCMCs) and can functionally compensate for loss of SLC20A1 in VCMCs. (Microbial infection) Functions as a retroviral receptor and confers human cells susceptibility to infection to amphotropic murine leukemia virus (A-MuLV), 10A1 murine leukemia virus (10A1 MLV) and some feline leukemia virus subgroup B (FeLV-B) variants. In Homo sapiens (Human), this protein is Sodium-dependent phosphate transporter 2 (SLC20A2).